We begin with the raw amino-acid sequence, 400 residues long: Ribosomal RNA large subunit methyltransferase I (400 aa).

A PUA domain is found at 6-84; that stretch reads FPRLVLAKGR…NEAIDSAFFE (79 aa).

Belongs to the methyltransferase superfamily. RlmI family.

It localises to the cytoplasm. The catalysed reaction is cytidine(1962) in 23S rRNA + S-adenosyl-L-methionine = 5-methylcytidine(1962) in 23S rRNA + S-adenosyl-L-homocysteine + H(+). Specifically methylates the cytosine at position 1962 (m5C1962) of 23S rRNA. The protein is Ribosomal RNA large subunit methyltransferase I of Klebsiella pneumoniae (strain 342).